Here is a 93-residue protein sequence, read N- to C-terminus: Putative regulatory protein Cthe_1316 (93 aa).

The disordered stretch occupies residues 74–93 (RLNTKEAEDVEVDDEEEIDE). The span at 81-93 (EDVEVDDEEEIDE) shows a compositional bias: acidic residues.

It belongs to the RemA family.

The sequence is that of Putative regulatory protein Cthe_1316 from Acetivibrio thermocellus (strain ATCC 27405 / DSM 1237 / JCM 9322 / NBRC 103400 / NCIMB 10682 / NRRL B-4536 / VPI 7372) (Clostridium thermocellum).